We begin with the raw amino-acid sequence, 478 residues long: Sugar transporter ERD6-like 18 (478 aa).

The next 12 membrane-spanning stretches (helical) occupy residues isoleucine 31–valine 51, isoleucine 71–phenylalanine 91, leucine 110–phenylalanine 130, isoleucine 133–isoleucine 153, phenylalanine 162–serine 180, isoleucine 188–proline 208, threonine 270–leucine 290, isoleucine 306–valine 326, proline 333–phenylalanine 353, valine 367–leucine 387, isoleucine 407–leucine 427, and glycine 433–valine 453.

Belongs to the major facilitator superfamily. Sugar transporter (TC 2.A.1.1) family. As to expression, expressed in leaf vasculature, stem and flowers.

It is found in the membrane. Sugar transporter. This chain is Sugar transporter ERD6-like 18 (SFP2), found in Arabidopsis thaliana (Mouse-ear cress).